The chain runs to 409 residues: FADH(2)-dependent resorcinol hydroxylase, oxygenase component (409 aa).

The protein belongs to the HpaH/HsaA monooxygenase family. The FADH(2)-dependent resorcinol hydroxylase is composed of two subunits, GraA (the oxygenase component) and GraD (the reductase component). Both subunits are required for activity.

The catalysed reaction is resorcinol + FADH2 + O2 = benzene-1,2,4-triol + FAD + H2O + H(+). Its pathway is aromatic compound metabolism. Functionally, involved in the gamma-resorcylate (2,6-dihydroxybenzoate) catabolism. Oxygenase component of the resorcinol hydroxylase, which catalyzes the FADH(2)-dependent conversion of resorcinol to hydroxyquinol. This chain is FADH(2)-dependent resorcinol hydroxylase, oxygenase component, found in Rhizobium sp. (strain MTP-10005).